Reading from the N-terminus, the 89-residue chain is Probable Fe(2+)-trafficking protein (89 aa).

The protein belongs to the Fe(2+)-trafficking protein family.

Could be a mediator in iron transactions between iron acquisition and iron-requiring processes, such as synthesis and/or repair of Fe-S clusters in biosynthetic enzymes. This Stenotrophomonas maltophilia (strain R551-3) protein is Probable Fe(2+)-trafficking protein.